A 200-amino-acid chain; its full sequence is ATP synthase subunit s, mitochondrial (200 aa).

The N-terminal 25 residues, Met-1–Tyr-25, are a transit peptide targeting the mitochondrion. Residues Met-1–Met-61 form an N-terminal domain region. Mg(2+) is bound at residue Gly-59. LRR repeat units follow at residues Val-62–Ile-87, Gln-88–Leu-116, Cys-117–Leu-141, and Glu-142–Leu-173. Mg(2+) is bound at residue Thr-93.

The protein belongs to the ATP synthase subunit s family. In terms of assembly, homotetramer. Associates with ATP synthase.

It localises to the mitochondrion. It is found in the mitochondrion inner membrane. In terms of biological role, involved in regulation of mitochondrial membrane ATP synthase. Necessary for H(+) conduction of ATP synthase. Facilitates energy-driven catalysis of ATP synthesis by blocking a proton leak through an alternative proton exit pathway. This is ATP synthase subunit s, mitochondrial (DMAC2L) from Pongo abelii (Sumatran orangutan).